A 284-amino-acid chain; its full sequence is 4-hydroxybenzoate octaprenyltransferase (284 aa).

The next 9 membrane-spanning stretches (helical) occupy residues 19-39 (IPIL…SHGL), 42-62 (ISYL…GCII), 85-105 (GQLS…VAFI), 107-127 (VLFL…LAIL), 134-154 (FFAI…FMAF), 165-185 (AWIF…IYAL), 211-231 (ILLF…YCDF), 233-253 (SFFY…YFLY), and 261-281 (CINA…MAVI).

This sequence belongs to the UbiA prenyltransferase family. The cofactor is Mg(2+).

The protein resides in the cell inner membrane. The enzyme catalyses all-trans-octaprenyl diphosphate + 4-hydroxybenzoate = 4-hydroxy-3-(all-trans-octaprenyl)benzoate + diphosphate. It participates in cofactor biosynthesis; ubiquinone biosynthesis. Catalyzes the prenylation of para-hydroxybenzoate (PHB) with an all-trans polyprenyl group. Mediates the second step in the final reaction sequence of ubiquinone-8 (UQ-8) biosynthesis, which is the condensation of the polyisoprenoid side chain with PHB, generating the first membrane-bound Q intermediate 3-octaprenyl-4-hydroxybenzoate. The sequence is that of 4-hydroxybenzoate octaprenyltransferase from Francisella tularensis subsp. novicida (strain U112).